A 359-amino-acid chain; its full sequence is NADH-quinone oxidoreductase subunit H (359 aa).

The next 8 helical transmembrane spans lie at I19 to L39, F94 to L114, V127 to G147, I175 to M195, F202 to I222, F255 to I275, V301 to L321, and C337 to I357.

This sequence belongs to the complex I subunit 1 family. In terms of assembly, NDH-1 is composed of 14 different subunits. Subunits NuoA, H, J, K, L, M, N constitute the membrane sector of the complex.

The protein localises to the cell inner membrane. The catalysed reaction is a quinone + NADH + 5 H(+)(in) = a quinol + NAD(+) + 4 H(+)(out). NDH-1 shuttles electrons from NADH, via FMN and iron-sulfur (Fe-S) centers, to quinones in the respiratory chain. The immediate electron acceptor for the enzyme in this species is believed to be ubiquinone. Couples the redox reaction to proton translocation (for every two electrons transferred, four hydrogen ions are translocated across the cytoplasmic membrane), and thus conserves the redox energy in a proton gradient. This subunit may bind ubiquinone. This is NADH-quinone oxidoreductase subunit H from Chlorobaculum tepidum (strain ATCC 49652 / DSM 12025 / NBRC 103806 / TLS) (Chlorobium tepidum).